The sequence spans 384 residues: Protein NDRG1 (384 aa).

Ser-2 carries the post-translational modification N-acetylserine. Ser-2, Ser-319, and Ser-326 each carry phosphoserine. A disordered region spans residues Arg-325–Cys-384. Residues Arg-327–Ser-336 are compositionally biased toward polar residues. At Thr-328 the chain carries Phosphothreonine; by SGK1. Ser-330 and Ser-332 each carry phosphoserine; by SGK1. At Ser-333 the chain carries Phosphoserine. Phosphothreonine is present on Thr-335. A phosphoserine mark is found at Ser-336 and Ser-342. 2 repeat units span residues Gly-339–Glu-348 and Gly-349–Glu-358. The interval Gly-339–Glu-358 is 2 X 10 AA tandem repeats of G-[PST]-R-S-R-S-H-T-S-E. The span at His-345 to Arg-361 shows a compositional bias: basic and acidic residues. Thr-346 carries the phosphothreonine; by SGK1 modification. Ser-352 carries the phosphoserine modification. Residue Thr-356 is modified to Phosphothreonine; by SGK1. Low complexity predominate over residues Ser-374–Cys-384.

It belongs to the NDRG family. As to quaternary structure, interacts with RAB4A (membrane-bound form); the interaction involves NDRG1 in vesicular recycling of CDH1. Interacts with APOA1, APOA2, PRA1 and RTN1. Post-translationally, under stress conditions, phosphorylated in the C-terminal on many serine and threonine residues. Phosphorylated in vitro by PKA. Phosphorylation enhanced by increased intracellular cAMP levels. Homocysteine induces dephosphorylation. Phosphorylation by SGK1 is cell cycle dependent.

It localises to the cytoplasm. The protein resides in the cytosol. Its subcellular location is the cytoskeleton. The protein localises to the microtubule organizing center. It is found in the centrosome. It localises to the nucleus. The protein resides in the cell membrane. In terms of biological role, stress-responsive protein involved in hormone responses, cell growth, and differentiation. Acts as a tumor suppressor in many cell types. Necessary but not sufficient for p53/TP53-mediated caspase activation and apoptosis. Has a role in cell trafficking notably of the Schwann cell and is necessary for the maintenance and development of the peripheral nerve myelin sheath. Required for vesicular recycling of CDH1 and TF. May also function in lipid trafficking. Protects cells from spindle disruption damage. Functions in p53/TP53-dependent mitotic spindle checkpoint. Regulates microtubule dynamics and maintains euploidy. This is Protein NDRG1 (NDRG1) from Bos taurus (Bovine).